The chain runs to 465 residues: E3 ubiquitin-protein ligase ORTHRUS-LIKE 1 (465 aa).

The interval 31 to 69 is disordered; the sequence is TSLSSPLDRSGDVDPLPVSDESGGSKADESMTDADETKK. The segment at 109 to 148 adopts an RING-type zinc-finger fold; it reads CSLCNQLPDRPVTILCGHNFCLKCFDKWIDQGNQICATCR. A YDG domain is found at 233–374; it reads VRNQGVLVGE…FKVCRYLFVR (142 aa). Residues 442 to 462 traverse the membrane as a helical segment; sequence MAMTCLLLFVLIILVGSSSIL.

It localises to the nucleus. The protein localises to the membrane. It catalyses the reaction S-ubiquitinyl-[E2 ubiquitin-conjugating enzyme]-L-cysteine + [acceptor protein]-L-lysine = [E2 ubiquitin-conjugating enzyme]-L-cysteine + N(6)-ubiquitinyl-[acceptor protein]-L-lysine.. It functions in the pathway protein modification; protein ubiquitination. E3 ubiquitin-protein ligase. May participate in methylation-dependent transcriptional regulation. Mediates ubiquitination with the E2 ubiquitin-conjugating enzyme UBC11. The chain is E3 ubiquitin-protein ligase ORTHRUS-LIKE 1 (ORTHL) from Arabidopsis thaliana (Mouse-ear cress).